Here is a 474-residue protein sequence, read N- to C-terminus: uncharacterized protein (474 aa).

The first 23 residues, 1 to 23, serve as a signal peptide directing secretion; it reads MLRRYLTLSFSSLLLLALLFLTG. A lipid anchor (N-palmitoyl cysteine) is attached at Cys-24. A lipid anchor (S-diacylglycerol cysteine) is attached at Cys-24.

It belongs to the MG067/MG068/MG395 family.

The protein resides in the cell membrane. This is an uncharacterized protein from Mycoplasma genitalium (strain ATCC 33530 / DSM 19775 / NCTC 10195 / G37) (Mycoplasmoides genitalium).